The chain runs to 570 residues: Guanine nucleotide-binding protein alpha-3 subunit (570 aa).

The 104-residue stretch at 10-113 (RETLRAYLSK…WIEAIKHAIE (104 aa)) folds into the PH domain. A G-alpha domain is found at 144 to 570 (PVLKLLLLGT…IISKTLEFYC (427 aa)). Positions 147-160 (KLLLLGTGESGKST) are G1 motif. Residue 152-159 (GTGESGKS) participates in GTP binding. Ser-159 contacts Mg(2+). Composition is skewed to low complexity over residues 254–272 (NNNSNSSSLKNNSGGSSSS) and 290–316 (NSNSASPNGPSSSTTTSTINTHNRSNS). The segment at 254 to 321 (NNNSNSSSLK…NRSNSDGSSN (68 aa)) is disordered. The G2 motif stretch occupies residues 386-394 (DILKSRATT). Residues 388 to 394 (LKSRATT), 414 to 418 (DVAGQ), 483 to 486 (NKID), and Ala-544 each bind GTP. Residue Thr-394 participates in Mg(2+) binding. Residues 410 to 419 (FRIVDVAGQR) form a G3 motif region. Residues 479–486 (ILFLNKID) are G4 motif. The segment at 542–547 (TCATDT) is G5 motif.

The protein belongs to the G-alpha family. G proteins are composed of 3 units; alpha, beta and gamma. The alpha chain contains the guanine nucleotide binding site.

Guanine nucleotide-binding proteins (G proteins) are involved as modulators or transducers in various transmembrane signaling systems. G alpha-3 plays a role in development. G alpha-3 mutants fail to aggregate. In Dictyostelium discoideum (Social amoeba), this protein is Guanine nucleotide-binding protein alpha-3 subunit (gpaC).